A 65-amino-acid polypeptide reads, in one-letter code: Putative beta-neurotoxin RjAa7 (65 aa).

In terms of domain architecture, LCN-type CS-alpha/beta spans 1–64 (KEGYPVGRDG…VWDSSTNKCG (64 aa)). Cystine bridges form between Cys11/Cys63, Cys15/Cys37, Cys22/Cys44, and Cys26/Cys46.

It belongs to the long (4 C-C) scorpion toxin superfamily. Sodium channel inhibitor family. Beta subfamily. As to expression, expressed by the venom gland.

The protein resides in the secreted. Functionally, beta toxins bind voltage-independently at site-4 of sodium channels (Nav) and shift the voltage of activation toward more negative potentials thereby affecting sodium channel activation and promoting spontaneous and repetitive firing. This is Putative beta-neurotoxin RjAa7 from Rhopalurus junceus (Caribbean blue scorpion).